The primary structure comprises 345 residues: N-glycosylase/DNA lyase (345 aa).

Residues Asn-149, Arg-154, and Arg-204 each coordinate DNA. Lys-249 acts as the Schiff-base intermediate with DNA in catalysis. The 8-oxoguanine site is built by Pro-266 and Asp-268. The DNA site is built by His-270 and Gln-287. Gln-315 and Phe-319 together coordinate 8-oxoguanine. Residues 324-334 show a composition bias toward basic and acidic residues; it reads RQSRHAQEPPA. Residues 324–345 form a disordered region; it reads RQSRHAQEPPAKRRKGSKGPEG. Positions 335 to 345 are enriched in basic residues; sequence KRRKGSKGPEG.

This sequence belongs to the type-1 OGG1 family. In terms of tissue distribution, ubiquitous.

It localises to the nucleus. The protein localises to the nucleoplasm. The protein resides in the nucleus speckle. It is found in the nucleus matrix. Its subcellular location is the mitochondrion. It catalyses the reaction 2'-deoxyribonucleotide-(2'-deoxyribose 5'-phosphate)-2'-deoxyribonucleotide-DNA = a 3'-end 2'-deoxyribonucleotide-(2,3-dehydro-2,3-deoxyribose 5'-phosphate)-DNA + a 5'-end 5'-phospho-2'-deoxyribonucleoside-DNA + H(+). Functionally, DNA repair enzyme that incises DNA at 8-oxoG residues. Excises 7,8-dihydro-8-oxoguanine and 2,6-diamino-4-hydroxy-5-N-methylformamidopyrimidine (FAPY) from damaged DNA. Has a beta-lyase activity that nicks DNA 3' to the lesion. This is N-glycosylase/DNA lyase (OGG1) from Homo sapiens (Human).